The primary structure comprises 333 residues: Ketoreductase sphI (333 aa).

Position 167 (Tyr167) interacts with NADP(+).

Belongs to the NAD(P)-dependent epimerase/dehydratase family. Dihydroflavonol-4-reductase subfamily.

Its function is as follows. Ketoreductase; part of the gene cluster that mediates the biosynthesis of sphingofungins, bioactive molecules acting as sphingolipid inhibitors via inhibiting serine palmitoyl transferase (SPT). Does not seem to be involved in any biosynthetic process leading to the production of sphingofungins, but might be connected to a regulation or resistance mechanism. This Aspergillus fumigatus (strain CBS 144.89 / FGSC A1163 / CEA10) (Neosartorya fumigata) protein is Ketoreductase sphI.